Reading from the N-terminus, the 87-residue chain is Large ribosomal subunit protein bL27 (87 aa).

A disordered region spans residues 1–21 (MAHKKGGGSTRNGRDSASKRL).

Belongs to the bacterial ribosomal protein bL27 family.

The sequence is that of Large ribosomal subunit protein bL27 from Amoebophilus asiaticus (strain 5a2).